The primary structure comprises 85 residues: UPF0335 protein Atu3758 (85 aa).

It belongs to the UPF0335 family.

The polypeptide is UPF0335 protein Atu3758 (Agrobacterium fabrum (strain C58 / ATCC 33970) (Agrobacterium tumefaciens (strain C58))).